The primary structure comprises 1115 residues: Scavenger receptor cysteine-rich type 1 protein M130 (1115 aa).

A signal peptide spans 1-46 (MDKLRMVLHENSGSADFRRCSAHLSSFTFAVVAVLSACLVTSSLGG). Residues 47–1044 (KDKELRLTGG…ESLHATGRSS (998 aa)) lie on the Extracellular side of the membrane. 9 consecutive SRCR domains span residues 51-151 (LRLT…VTCS), 158-258 (MGLV…VICL), 265-365 (LRVV…VTCS), 372-472 (LRLK…ITCS), 477-577 (PRLV…VVCS), 582-682 (IRLV…VICS), 718-818 (LRLV…VICS), 823-925 (LRLI…ITCA), and 928-1028 (IRLQ…VTCS). Disulfide bonds link Cys76/Cys140, Cys89/Cys150, Cys120/Cys130, Cys183/Cys247, Cys196/Cys257, Cys227/Cys237, Cys290/Cys354, Cys303/Cys364, Cys334/Cys344, Cys397/Cys461, Cys410/Cys471, Cys441/Cys451, Cys502/Cys566, Cys515/Cys576, Cys546/Cys556, Cys607/Cys671, Cys620/Cys681, Cys651/Cys661, Cys743/Cys807, Cys756/Cys817, Cys787/Cys797, Cys863/Cys924, and Cys894/Cys904. A glycan (N-linked (GlcNAc...) asparagine) is linked at Asn105. N-linked (GlcNAc...) asparagine glycosylation is present at Asn139. An N-linked (GlcNAc...) asparagine glycan is attached at Asn936. Intrachain disulfides connect Cys953–Cys1017, Cys966–Cys1027, and Cys997–Cys1007. The chain crosses the membrane as a helical span at residues 1045–1065 (FVALAIFGVILLACLIAFLIW). Topologically, residues 1066 to 1115 (TQKRRQRQRLSVFSGGENSVHQIQYREMNSCLKADETDMLNPSGDHSEVQ) are cytoplasmic. The Internalization signal motif lies at 1090–1093 (YREM).

In terms of assembly, interacts with CSNK2B. A soluble form (sCD163) is produced by proteolytic shedding which can be induced by lipopolysaccharide, phorbol ester and Fc region of immunoglobulin gamma. This cleavage is dependent on protein kinase C and tyrosine kinases and can be blocked by protease inhibitors. The shedding is inhibited by the tissue inhibitor of metalloproteinase TIMP3, and thus probably induced by membrane-bound metalloproteinases ADAMs. In terms of processing, phosphorylated. Expressed in monocytes and macrophages. Detected only in one population of monocytes (CD163+) which is in advanced maturation stage.

It localises to the secreted. The protein resides in the cell membrane. In terms of biological role, involved in clearance and endocytosis of hemoglobin/haptoglobin complexes by macrophages and may thereby protect tissues from free hemoglobin-mediated oxidative damage. May play a role in the uptake and recycling of iron, via endocytosis of hemoglobin/haptoglobin and subsequent breakdown of heme. Binds hemoglobin/haptoglobin complexes in a calcium-dependent and pH-dependent manner. Induces a cascade of intracellular signals that involves tyrosine kinase-dependent calcium mobilization, inositol triphosphate production and secretion of IL6 and CSF1. May play a role in the process of infection of porcine monocytes/macrophages by African swine fever virus (ASFV). In case of porcine reproductive and respiratory syndrome virus (PRRSV), serves mediates virion attachment and plays a role in viral entry. Its function is as follows. After shedding, the soluble form (sCD163) may play an anti-inflammatory role. The protein is Scavenger receptor cysteine-rich type 1 protein M130 (CD163) of Sus scrofa (Pig).